Reading from the N-terminus, the 89-residue chain is Arminin 7519 (89 aa).

The N-terminal stretch at 1–18 is a signal peptide; that stretch reads MRSTFAVLFLALIALTYS. Residues 19–59 constitute a propeptide that is removed on maturation; the sequence is KNYQDVKEEIKNEVENEILRDLGEDDDELDDNAQEAVNDAR. A86 is modified (alanine amide).

The protein belongs to the arminin family. In terms of tissue distribution, expressed in entodermal epithelium along the body column.

The protein localises to the secreted. It is found in the target cell membrane. In terms of biological role, antimicrobial peptide with a broad-spectrum antimicrobial activity. Keeps its antibacterial activity under a wide range of salt concentrations that mimic physiological conditions of human blood, which is surprising, since Hydra is an obligate freshwater animal with nearly no salt tolerance. Does not affect red blood cells. In Hydra vulgaris (Hydra), this protein is Arminin 7519.